The sequence spans 351 residues: Small ribosomal subunit biogenesis GTPase RsgA (351 aa).

The CP-type G domain occupies 107–277; sequence ENLLQRPDNF…LIDSPGIREF (171 aa). GTP contacts are provided by residues 163–166 and 219–227; these read NKTD and GQSGVGKSS. 4 residues coordinate Zn(2+): Cys-301, Cys-306, His-308, and Cys-314.

This sequence belongs to the TRAFAC class YlqF/YawG GTPase family. RsgA subfamily. In terms of assembly, monomer. Associates with 30S ribosomal subunit, binds 16S rRNA. Zn(2+) is required as a cofactor.

It is found in the cytoplasm. One of several proteins that assist in the late maturation steps of the functional core of the 30S ribosomal subunit. Helps release RbfA from mature subunits. May play a role in the assembly of ribosomal proteins into the subunit. Circularly permuted GTPase that catalyzes slow GTP hydrolysis, GTPase activity is stimulated by the 30S ribosomal subunit. This Marinobacter nauticus (strain ATCC 700491 / DSM 11845 / VT8) (Marinobacter aquaeolei) protein is Small ribosomal subunit biogenesis GTPase RsgA.